The primary structure comprises 380 residues: Protein Wnt-5a (380 aa).

Residues 1 to 35 (MKKSIGILSPGVALGTAGSAMSSKFFVMALAVFFS) form the signal peptide. Residues 36–61 (FAQVVIEANSWWSLGMNNPVQMSEVY) constitute a propeptide that is removed on maturation. Residues Cys-104 and Cys-115 are joined by a disulfide bond. Residues Asn-114 and Asn-120 are each glycosylated (N-linked (GlcNAc...) asparagine). Disulfide bonds link Cys-154/Cys-162, Cys-164/Cys-182, Cys-238/Cys-252, Cys-240/Cys-247, Cys-309/Cys-340, Cys-325/Cys-335, Cys-339/Cys-379, Cys-355/Cys-370, Cys-357/Cys-367, and Cys-362/Cys-363. Residue Ser-244 is the site of O-palmitoleoyl serine; by PORCN attachment. N-linked (GlcNAc...) asparagine glycosylation is found at Asn-312 and Asn-326.

Belongs to the Wnt family. In terms of assembly, forms a soluble 1:1 complex with AFM; this prevents oligomerization and is required for prolonged biological activity. The complex with AFM may represent the physiological form in body fluids. Homooligomer; disulfide-linked, leading to inactivation (in vitro). Interacts with PORCN. Interacts with WLS. Interacts with glypican GCP3. Interacts with PKD1 (via extracellular domain). Interacts with TMEM67. Post-translationally, glycosylation is necessary for secretion but not for activity. In terms of processing, palmitoleoylation is required for efficient binding to frizzled receptors. Depalmitoleoylation leads to Wnt signaling pathway inhibition. Proteolytic processing by TIKI1 and TIKI2 promotes oxidation and formation of large disulfide-bond oligomers, leading to inactivation of WNT5A.

It localises to the secreted. It is found in the extracellular space. Its subcellular location is the extracellular matrix. In terms of biological role, ligand for members of the frizzled family of seven transmembrane receptors. Can activate or inhibit canonical Wnt signaling, depending on receptor context. In the presence of FZD4, activates beta-catenin signaling. In the presence of ROR2, inhibits the canonical Wnt pathway by promoting beta-catenin degradation through a GSK3-independent pathway which involves down-regulation of beta-catenin-induced reporter gene expression. Suppression of the canonical pathway allows chondrogenesis to occur. Inhibits tumor formation. Stimulates cell migration. Decreases proliferation, migration, invasiveness and clonogenicity of carcinoma cells and may act as a tumor suppressor. Mediates motility of melanoma cells. Required during embryogenesis for extension of the primary anterior-posterior axis and for outgrowth of limbs and the genital tubercle. Inhibits type II collagen expression in chondrocytes. This Oryctolagus cuniculus (Rabbit) protein is Protein Wnt-5a.